Reading from the N-terminus, the 201-residue chain is 3-isopropylmalate dehydratase small subunit (201 aa).

Belongs to the LeuD family. LeuD type 1 subfamily. Heterodimer of LeuC and LeuD.

It catalyses the reaction (2R,3S)-3-isopropylmalate = (2S)-2-isopropylmalate. Its pathway is amino-acid biosynthesis; L-leucine biosynthesis; L-leucine from 3-methyl-2-oxobutanoate: step 2/4. Functionally, catalyzes the isomerization between 2-isopropylmalate and 3-isopropylmalate, via the formation of 2-isopropylmaleate. The polypeptide is 3-isopropylmalate dehydratase small subunit (Escherichia fergusonii (strain ATCC 35469 / DSM 13698 / CCUG 18766 / IAM 14443 / JCM 21226 / LMG 7866 / NBRC 102419 / NCTC 12128 / CDC 0568-73)).